The primary structure comprises 407 residues: Na(+)-translocating NADH-quinone reductase subunit F (407 aa).

A helical transmembrane segment spans residues 3–23 (IILGVVMFTLIVLALVLVILF). The 2Fe-2S ferredoxin-type domain occupies 32 to 126 (GDITISINGD…DMDIELPEEI (95 aa)). [2Fe-2S] cluster is bound by residues C69, C75, C78, and C110. The FAD-binding FR-type domain maps to 129-269 (VKKWECTVIS…SGPFGEFFAK (141 aa)). A catalytic region spans residues 272–389 (DAEMVFIGGG…PMMNAAVIGM (118 aa)).

This sequence belongs to the NqrF family. Composed of six subunits; NqrA, NqrB, NqrC, NqrD, NqrE and NqrF. Requires [2Fe-2S] cluster as cofactor. The cofactor is FAD.

The protein resides in the cell inner membrane. It carries out the reaction a ubiquinone + n Na(+)(in) + NADH + H(+) = a ubiquinol + n Na(+)(out) + NAD(+). In terms of biological role, NQR complex catalyzes the reduction of ubiquinone-1 to ubiquinol by two successive reactions, coupled with the transport of Na(+) ions from the cytoplasm to the periplasm. The first step is catalyzed by NqrF, which accepts electrons from NADH and reduces ubiquinone-1 to ubisemiquinone by a one-electron transfer pathway. This Vibrio vulnificus (strain CMCP6) protein is Na(+)-translocating NADH-quinone reductase subunit F.